A 276-amino-acid chain; its full sequence is Putative oxidoreductase SadH (276 aa).

Ser-142 serves as a coordination point for substrate. The active-site Proton acceptor is the Tyr-155.

This sequence belongs to the short-chain dehydrogenases/reductases (SDR) family.

In terms of biological role, required for maintaining the appropriate mycolic acid composition and permeability of the envelope on its exposure to acidic pH. This is Putative oxidoreductase SadH (sadH) from Mycobacterium tuberculosis (strain CDC 1551 / Oshkosh).